Reading from the N-terminus, the 383-residue chain is BRISC and BRCA1-A complex member 2 (383 aa).

2 UEV-like regions span residues 30–147 (DATN…TLLE) and 275–364 (IAAF…RAKA).

The protein belongs to the BABAM2 family. Component of the ARISC complex, at least composed of UIMC1/RAP80, ABRAXAS1, BRCC3/BRCC36, BABAM2 and BABAM1/NBA1. Component of the BRCA1-A complex, at least composed of BRCA1, BARD1, UIMC1/RAP80, ABRAXAS1, BRCC3/BRCC36, BABAM2 and BABAM1/NBA1. In the BRCA1-A complex, interacts directly with ABRAXAS1, BRCC3/BRCC36 and BABAM1/NBA1. Binds polyubiquitin. Component of the BRISC complex, at least composed of ABRAXAS2, BRCC3/BRCC36, BABAM2 and BABAM1/NBA1. Identified in a complex with SHMT2 and the other subunits of the BRISC complex. Component of the BRCA1/BRCA2 containing complex (BRCC), which also contains BRCA1, BRCA2, BARD1, BRCC3/BRCC36 and RAD51. BRCC is a ubiquitin E3 ligase complex that enhances cellular survival following DNA damage. May interact with FAS and TNFRSF1A.

It is found in the cytoplasm. The protein resides in the nucleus. In terms of biological role, component of the BRCA1-A complex, a complex that specifically recognizes 'Lys-63'-linked ubiquitinated histones H2A and H2AX at DNA lesions sites, leading to target the BRCA1-BARD1 heterodimer to sites of DNA damage at double-strand breaks (DSBs). The BRCA1-A complex also possesses deubiquitinase activity that specifically removes 'Lys-63'-linked ubiquitin on histones H2A and H2AX. In the BRCA1-A complex, it acts as an adapter that bridges the interaction between BABAM1/NBA1 and the rest of the complex, thereby being required for the complex integrity and modulating the E3 ubiquitin ligase activity of the BRCA1-BARD1 heterodimer. Component of the BRISC complex, a multiprotein complex that specifically cleaves 'Lys-63'-linked ubiquitin in various substrates. Within the BRISC complex, acts as an adapter that bridges the interaction between BABAM1/NBA1 and the rest of the complex, thereby being required for the complex integrity. The BRISC complex is required for normal mitotic spindle assembly and microtubule attachment to kinetochores via its role in deubiquitinating NUMA1. The BRISC complex plays a role in interferon signaling via its role in the deubiquitination of the interferon receptor IFNAR1; deubiquitination increases IFNAR1 activity by enhancing its stability and cell surface expression. Down-regulates the response to bacterial lipopolysaccharide (LPS) via its role in IFNAR1 deubiquitination. May play a role in homeostasis or cellular differentiation in cells of neural, epithelial and germline origins. May also act as a death receptor-associated anti-apoptotic protein, which inhibits the mitochondrial apoptotic pathway. May regulate TNF-alpha signaling through its interactions with TNFRSF1A; however these effects may be indirect. In Gallus gallus (Chicken), this protein is BRISC and BRCA1-A complex member 2 (BABAM2).